We begin with the raw amino-acid sequence, 261 residues long: Hemin import ATP-binding protein HmuV (261 aa).

Positions 3 to 243 constitute an ABC transporter domain; sequence LQAQDLSVDR…ANLRRVYGVE (241 aa). 35–42 provides a ligand contact to ATP; that stretch reads GANGAGKS.

The protein belongs to the ABC transporter superfamily. Heme (hemin) importer (TC 3.A.1.14.5) family. In terms of assembly, the complex is composed of two ATP-binding proteins (HmuV), two transmembrane proteins (HmuU) and a solute-binding protein (HmuT).

It is found in the cell inner membrane. In terms of biological role, part of the ABC transporter complex HmuTUV involved in hemin import. Responsible for energy coupling to the transport system. This Bordetella avium (strain 197N) protein is Hemin import ATP-binding protein HmuV.